Consider the following 210-residue polypeptide: Large ribosomal subunit protein uL3 (210 aa).

The protein belongs to the universal ribosomal protein uL3 family. As to quaternary structure, part of the 50S ribosomal subunit. Forms a cluster with proteins L14 and L19.

In terms of biological role, one of the primary rRNA binding proteins, it binds directly near the 3'-end of the 23S rRNA, where it nucleates assembly of the 50S subunit. This chain is Large ribosomal subunit protein uL3, found in Caldicellulosiruptor saccharolyticus (strain ATCC 43494 / DSM 8903 / Tp8T 6331).